A 276-amino-acid chain; its full sequence is Light-independent protochlorophyllide reductase iron-sulfur ATP-binding protein (276 aa).

ATP-binding positions include 12-17 (GIGKST) and Lys-41. A Mg(2+)-binding site is contributed by Ser-16. 2 residues coordinate [4Fe-4S] cluster: Cys-97 and Cys-131. 182–183 (NR) contributes to the ATP binding site.

This sequence belongs to the NifH/BchL/ChlL family. In terms of assembly, homodimer. Protochlorophyllide reductase is composed of three subunits; BchL, BchN and BchB. It depends on [4Fe-4S] cluster as a cofactor.

It carries out the reaction chlorophyllide a + oxidized 2[4Fe-4S]-[ferredoxin] + 2 ADP + 2 phosphate = protochlorophyllide a + reduced 2[4Fe-4S]-[ferredoxin] + 2 ATP + 2 H2O. It participates in porphyrin-containing compound metabolism; bacteriochlorophyll biosynthesis (light-independent). In terms of biological role, component of the dark-operative protochlorophyllide reductase (DPOR) that uses Mg-ATP and reduced ferredoxin to reduce ring D of protochlorophyllide (Pchlide) to form chlorophyllide a (Chlide). This reaction is light-independent. The L component serves as a unique electron donor to the NB-component of the complex, and binds Mg-ATP. The chain is Light-independent protochlorophyllide reductase iron-sulfur ATP-binding protein from Chlorobium chlorochromatii (strain CaD3).